Here is a 398-residue protein sequence, read N- to C-terminus: Acetate kinase (398 aa).

Asn-7 contributes to the Mg(2+) binding site. Residue Lys-14 coordinates ATP. Arg-91 is a binding site for substrate. The active-site Proton donor/acceptor is the Asp-148. ATP-binding positions include 208–212, 283–285, and 331–335; these read HIGNG, DMR, and GVGEN. Residue Glu-385 participates in Mg(2+) binding.

The protein belongs to the acetokinase family. In terms of assembly, homodimer. Mg(2+) is required as a cofactor. The cofactor is Mn(2+).

Its subcellular location is the cytoplasm. The catalysed reaction is acetate + ATP = acetyl phosphate + ADP. It participates in metabolic intermediate biosynthesis; acetyl-CoA biosynthesis; acetyl-CoA from acetate: step 1/2. In terms of biological role, catalyzes the formation of acetyl phosphate from acetate and ATP. Can also catalyze the reverse reaction. This Porphyromonas gingivalis (strain ATCC BAA-308 / W83) protein is Acetate kinase.